The primary structure comprises 238 residues: tRNA (guanine-N(1)-)-methyltransferase (238 aa).

S-adenosyl-L-methionine is bound by residues glycine 108 and 127 to 132; that span reads LGDFVL.

It belongs to the RNA methyltransferase TrmD family. As to quaternary structure, homodimer.

The protein localises to the cytoplasm. The enzyme catalyses guanosine(37) in tRNA + S-adenosyl-L-methionine = N(1)-methylguanosine(37) in tRNA + S-adenosyl-L-homocysteine + H(+). Its function is as follows. Specifically methylates guanosine-37 in various tRNAs. The protein is tRNA (guanine-N(1)-)-methyltransferase of Streptococcus uberis (strain ATCC BAA-854 / 0140J).